The chain runs to 113 residues: Beta-defensin 112 (113 aa).

Disulfide bonds link Cys-54–Cys-82, Cys-61–Cys-75, and Cys-65–Cys-83.

Belongs to the beta-defensin family.

It localises to the secreted. Functionally, has antibacterial activity. In Homo sapiens (Human), this protein is Beta-defensin 112 (DEFB112).